We begin with the raw amino-acid sequence, 328 residues long: Sin3 histone deacetylase corepressor complex component SDS3 (328 aa).

Over residues 1-22 (MSAAGLLAPAPAPAAAPAAPEY) the composition is skewed to low complexity. The tract at residues 1 to 69 (MSAAGLLAPA…HDEEDYVEMK (69 aa)) is disordered. Residue S2 is modified to N-acetylserine. The tract at residues 2 to 170 (SAAGLLAPAP…IENEKLTMEL (169 aa)) is mediates interaction with USP17L2. Acidic residues-rich tracts occupy residues 23–37 (YPEDEEELESAEDDE) and 45–54 (SDEDTEDASE). Phosphoserine is present on residues S32 and S45. T49 carries the post-translational modification Phosphothreonine. A Phosphoserine modification is found at S53. The segment covering 56–69 (DLAKHDEEDYVEMK) has biased composition (basic and acidic residues). The stretch at 66–171 (VEMKEQMYQD…ENEKLTMELT (106 aa)) forms a coiled coil. Glycyl lysine isopeptide (Lys-Gly) (interchain with G-Cter in SUMO2) cross-links involve residues K69, K178, and K201. The segment at 188 to 226 (RPNDPVPIPDKRRKPAPAQLNYLLTDEQIMEDLRTLNKL) is sin3 interaction domain (SID). Positions 226–252 (LKSPKRPASPSSPEHLPATPAESPAQR) are disordered. S228, S234, and S237 each carry phosphoserine. Position 244 is a phosphothreonine (T244).

This sequence belongs to the SDS3 family. Interacts with HCFC1. Homodimer. Component of the SIN3 histone deacetylase (HDAC) corepressor complex. Interacts with SIN3A. Interaction with SIN3B enhances the interaction between SIN3B and HDAC1 to form a complex. Component of a mSin3A corepressor complex that contains SIN3A, SAP130, SUDS3/SAP45, ARID4B/SAP180, HDAC1 and HDAC2. Interacts with USP17L2; the interaction is direct. Interacts with FOXK2. Polyubiquitinated. 'Lys-63'-polyubiquitinated SUDS3 positively regulates histone deacetylation. Regulated through deubiquitination by USP17L2/USP17 that cleaves 'Lys-63'-linked ubiquitin chains. Expressed in all newborn tissues tested, including brain, kidney and liver.

It is found in the nucleus. Functionally, regulatory protein which represses transcription and augments histone deacetylase activity of HDAC1. May have a potential role in tumor suppressor pathways through regulation of apoptosis. May function in the assembly and/or enzymatic activity of the mSin3A corepressor complex or in mediating interactions between the complex and other regulatory complexes. This is Sin3 histone deacetylase corepressor complex component SDS3 (Suds3) from Mus musculus (Mouse).